Consider the following 207-residue polypeptide: Peptidyl-tRNA hydrolase (207 aa).

Tyr-14 serves as a coordination point for tRNA. His-19 functions as the Proton acceptor in the catalytic mechanism. 3 residues coordinate tRNA: Phe-68, Asn-70, and Asn-116.

It belongs to the PTH family. In terms of assembly, monomer.

The protein resides in the cytoplasm. The catalysed reaction is an N-acyl-L-alpha-aminoacyl-tRNA + H2O = an N-acyl-L-amino acid + a tRNA + H(+). Functionally, hydrolyzes ribosome-free peptidyl-tRNAs (with 1 or more amino acids incorporated), which drop off the ribosome during protein synthesis, or as a result of ribosome stalling. In terms of biological role, catalyzes the release of premature peptidyl moieties from peptidyl-tRNA molecules trapped in stalled 50S ribosomal subunits, and thus maintains levels of free tRNAs and 50S ribosomes. This Hyphomonas neptunium (strain ATCC 15444) protein is Peptidyl-tRNA hydrolase.